Reading from the N-terminus, the 270-residue chain is Type III pantothenate kinase (270 aa).

Residue 6 to 13 (DVRNTHTV) participates in ATP binding. Position 109–112 (109–112 (GADR)) interacts with substrate. Aspartate 111 acts as the Proton acceptor in catalysis. Aspartate 131 is a binding site for K(+). Serine 134 provides a ligand contact to ATP. Threonine 186 serves as a coordination point for substrate.

This sequence belongs to the type III pantothenate kinase family. In terms of assembly, homodimer. Requires NH4(+) as cofactor. K(+) serves as cofactor.

It is found in the cytoplasm. The catalysed reaction is (R)-pantothenate + ATP = (R)-4'-phosphopantothenate + ADP + H(+). The protein operates within cofactor biosynthesis; coenzyme A biosynthesis; CoA from (R)-pantothenate: step 1/5. Catalyzes the phosphorylation of pantothenate (Pan), the first step in CoA biosynthesis. The polypeptide is Type III pantothenate kinase (Mycolicibacterium gilvum (strain PYR-GCK) (Mycobacterium gilvum (strain PYR-GCK))).